Here is a 533-residue protein sequence, read N- to C-terminus: CEP295 N-terminal-like protein (533 aa).

Disordered regions lie at residues 1–40 (MQRDTERAAQLSPSSEDEALVLRQKPLEMPAQEEDSTTLQ), 84–176 (RSMG…RVTR), 286–333 (LKAD…ETTE), and 370–399 (AGTSREQDDLLSLSPESGQEPPKSPLLEDE). Positions 40 to 72 (QQWKARQLQRLAEELKAEWQEARLQQVRQAERL) form a coiled coil. Over residues 107–126 (KERNRAAFREERGRREEHPR) the composition is skewed to basic and acidic residues. Residues 416–531 (MALRQKQKAE…ARKRLQEFQK (116 aa)) are a coiled coil.

Expressed in mature spermatozoa (at protein level). Detected in retina, lung and kidney. In brain, highly expressed in brain-stem, cerebral cortex and thalamus with lesser expression in cerebellum and hippocampus.

The protein localises to the cell projection. It localises to the cilium. This is CEP295 N-terminal-like protein from Mus musculus (Mouse).